A 379-amino-acid polypeptide reads, in one-letter code: Multicilin (379 aa).

The tract at residues 1 to 129 is necessary and sufficient for its degradation during the cell cycle; the sequence is MQACEGSAAG…AMDDLIADSS (129 aa). 2 disordered regions span residues 26-71 and 88-107; these read SRRT…APLP and LGTEASPSGDSSASQNPSLQ. Residues 92–107 show a composition bias toward polar residues; the sequence is ASPSGDSSASQNPSLQ. Residues 130–379 are necessary and sufficient for proper nuclear localization; that stretch reads SLMSPPLTNS…GGYKFRWVPS (250 aa). The interval 171–241 is necessary and sufficient for interaction with GMNN and sufficient for homodimerization; the sequence is PPPTEQYWKE…SVLDKLMITQ (71 aa). The stretch at 175–223 forms a coiled coil; it reads EQYWKEVADQNQRALGTALIENNQLHVTLTQKQEEIASLRERNVQLKEL. The segment covering 291–309 has biased composition (basic and acidic residues); the sequence is NRDPKRPRLQPEPDSKDCS. Positions 291 to 312 are disordered; it reads NRDPKRPRLQPEPDSKDCSSRN.

Belongs to the geminin family. In terms of assembly, heterodimer (via coiled-coil domain) with GMNN (via coiled-coil domain); targets GMNN to the nucleus. Can form homodimers (in vitro, via coiled-coil domain), but these are much less stable than the heterodimer formed with GMNN.

Its subcellular location is the nucleus. Transcription regulator specifically required for multiciliate cell differentiation. Acts in a multiprotein complex containing E2F4 and E2F5 that binds and activates genes required for centriole biogenesis. Required for the deuterosome-mediated acentriolar pathway. Plays a role in mitotic cell cycle progression by promoting cell cycle exit. Modulates GMNN activity by reducing its affinity for CDT1. In Mus musculus (Mouse), this protein is Multicilin (Mcidas).